The sequence spans 315 residues: ATP synthase gamma chain (315 aa).

It belongs to the ATPase gamma chain family. F-type ATPases have 2 components, CF(1) - the catalytic core - and CF(0) - the membrane proton channel. CF(1) has five subunits: alpha(3), beta(3), gamma(1), delta(1), epsilon(1). CF(0) has three main subunits: a, b and c.

It is found in the cell membrane. Its function is as follows. Produces ATP from ADP in the presence of a proton gradient across the membrane. The gamma chain is believed to be important in regulating ATPase activity and the flow of protons through the CF(0) complex. The protein is ATP synthase gamma chain of Latilactobacillus sakei subsp. sakei (strain 23K) (Lactobacillus sakei subsp. sakei).